A 101-amino-acid chain; its full sequence is Histone H1-like protein EM6 (101 aa).

Basic residues-rich tracts occupy residues 1–35 (AKKR…HVRK) and 58–101 (AKKK…RRRR). The disordered stretch occupies residues 1–101 (AKKRSRSRKR…SRTARSRRRR (101 aa)). Repeat copies occupy residues 3 to 4 (KR), 5 to 6 (SR), 7 to 8 (SR), and 9 to 10 (KR). A 10 X 2 AA approximate tandem repeats of [SK]-R region spans residues 3-22 (KRSRSRKRSASRKRSRSRKR). A 5; approximate repeat occupies 11 to 12 (SA). 5 repeat units span residues 13 to 14 (SR), 15 to 16 (KR), 17 to 18 (SR), 19 to 20 (SR), and 21 to 22 (KR). A globular region spans residues 32–65 (HVRKALAAGMKNHLLAHPKGSNNFILAKKKAPRR).

Sperm.

Its subcellular location is the nucleus. It is found in the chromosome. The protein is Histone H1-like protein EM6 of Ensis minor (Razor shell).